We begin with the raw amino-acid sequence, 328 residues long: UPF0421 protein SERP1427 (328 aa).

The next 4 membrane-spanning stretches (helical) occupy residues 26 to 46 (LFCM…IVTI), 61 to 81 (LPAT…FGDQ), 109 to 129 (AVLT…FNFF), and 132 to 152 (LLTA…ILPP).

It belongs to the UPF0421 family.

It localises to the cell membrane. In Staphylococcus epidermidis (strain ATCC 35984 / DSM 28319 / BCRC 17069 / CCUG 31568 / BM 3577 / RP62A), this protein is UPF0421 protein SERP1427.